The sequence spans 447 residues: N-succinylarginine dihydrolase (447 aa).

Substrate is bound by residues 19-28 (GGLAVGNIAS), N110, and 137-138 (HR). Residue E174 is part of the active site. Residue R213 coordinates substrate. The active site involves H249. Residues D251 and N362 each contribute to the substrate site. C368 acts as the Nucleophile in catalysis.

The protein belongs to the succinylarginine dihydrolase family. Homodimer.

The enzyme catalyses N(2)-succinyl-L-arginine + 2 H2O + 2 H(+) = N(2)-succinyl-L-ornithine + 2 NH4(+) + CO2. The protein operates within amino-acid degradation; L-arginine degradation via AST pathway; L-glutamate and succinate from L-arginine: step 2/5. Its function is as follows. Catalyzes the hydrolysis of N(2)-succinylarginine into N(2)-succinylornithine, ammonia and CO(2). The polypeptide is N-succinylarginine dihydrolase (Nitrosospira multiformis (strain ATCC 25196 / NCIMB 11849 / C 71)).